Here is a 313-residue protein sequence, read N- to C-terminus: Phosphoenolpyruvate phosphomutase (313 aa).

A disordered region spans residues 1–23; the sequence is MNATERPGSDGTGSPESVGSRLK. Asp-69 functions as the Nucleophile in the catalytic mechanism.

This sequence belongs to the isocitrate lyase/PEP mutase superfamily. PEP mutase family.

The enzyme catalyses phosphoenolpyruvate + H(+) = 3-phosphonopyruvate. It functions in the pathway secondary metabolite biosynthesis; bialaphos biosynthesis. Functionally, formation of a carbon-phosphorus bond by converting phosphoenolpyruvate (PEP) to phosphonopyruvate (P-Pyr). The sequence is that of Phosphoenolpyruvate phosphomutase (ppm) from Streptomyces viridochromogenes (strain DSM 40736 / JCM 4977 / BCRC 1201 / Tue 494).